Reading from the N-terminus, the 404-residue chain is RNA exonuclease 3 (404 aa).

Over residues 1-17 the composition is skewed to polar residues; that stretch reads MNNNAQNKRSLDDSNGN. The disordered stretch occupies residues 1–29; it reads MNNNAQNKRSLDDSNGNDTKRPKQEDPKY. The span at 18 to 28 shows a compositional bias: basic and acidic residues; it reads DTKRPKQEDPK. In terms of domain architecture, Exonuclease spans 241 to 389; sequence VLGIDCEMGF…EDSIAAIDIV (149 aa).

Belongs to the REXO1/REXO3 family.

It is found in the cytoplasm. It localises to the nucleus. In terms of biological role, 3' to 5' exoribonuclease required for proper 3' end maturation of MRP RNA and of the U5L snRNA. The sequence is that of RNA exonuclease 3 (REX3) from Candida albicans (strain SC5314 / ATCC MYA-2876) (Yeast).